The primary structure comprises 199 residues: Peroxisomal membrane protein PEX17 (199 aa).

It localises to the peroxisome membrane. Functionally, component of the peroxisomal translocation machinery with PEX13 and PEX14. Interacts indirectly with the PTS1 receptor (PAS10/PEX5) and directly binds to PEX14. Required for import of both PTS1 and PTS2 proteins. The sequence is that of Peroxisomal membrane protein PEX17 (PEX17) from Saccharomyces cerevisiae (strain ATCC 204508 / S288c) (Baker's yeast).